The following is a 420-amino-acid chain: Light-independent protochlorophyllide reductase subunit N (420 aa).

Positions 21, 46, and 103 each coordinate [4Fe-4S] cluster.

It belongs to the BchN/ChlN family. As to quaternary structure, protochlorophyllide reductase is composed of three subunits; BchL, BchN and BchB. Forms a heterotetramer of two BchB and two BchN subunits. [4Fe-4S] cluster serves as cofactor.

It carries out the reaction chlorophyllide a + oxidized 2[4Fe-4S]-[ferredoxin] + 2 ADP + 2 phosphate = protochlorophyllide a + reduced 2[4Fe-4S]-[ferredoxin] + 2 ATP + 2 H2O. The protein operates within porphyrin-containing compound metabolism; bacteriochlorophyll biosynthesis (light-independent). In terms of biological role, component of the dark-operative protochlorophyllide reductase (DPOR) that uses Mg-ATP and reduced ferredoxin to reduce ring D of protochlorophyllide (Pchlide) to form chlorophyllide a (Chlide). This reaction is light-independent. The NB-protein (BchN-BchB) is the catalytic component of the complex. In Chlorobium phaeobacteroides (strain DSM 266 / SMG 266 / 2430), this protein is Light-independent protochlorophyllide reductase subunit N.